We begin with the raw amino-acid sequence, 283 residues long: Thymidylate synthase (283 aa).

DUMP is bound by residues arginine 31 and 145–146; that span reads RR. Cysteine 165 functions as the Nucleophile in the catalytic mechanism. DUMP contacts are provided by residues 185–188, asparagine 196, and 226–228; these read RSAD and HIY. A (6R)-5,10-methylene-5,6,7,8-tetrahydrofolate-binding site is contributed by aspartate 188. (6R)-5,10-methylene-5,6,7,8-tetrahydrofolate is bound at residue serine 282.

Belongs to the thymidylate synthase family. Bacterial-type ThyA subfamily. As to quaternary structure, homodimer.

It is found in the cytoplasm. The catalysed reaction is dUMP + (6R)-5,10-methylene-5,6,7,8-tetrahydrofolate = 7,8-dihydrofolate + dTMP. The protein operates within pyrimidine metabolism; dTTP biosynthesis. Functionally, catalyzes the reductive methylation of 2'-deoxyuridine-5'-monophosphate (dUMP) to 2'-deoxythymidine-5'-monophosphate (dTMP) while utilizing 5,10-methylenetetrahydrofolate (mTHF) as the methyl donor and reductant in the reaction, yielding dihydrofolate (DHF) as a by-product. This enzymatic reaction provides an intracellular de novo source of dTMP, an essential precursor for DNA biosynthesis. This chain is Thymidylate synthase, found in Symbiobacterium thermophilum (strain DSM 24528 / JCM 14929 / IAM 14863 / T).